Here is a 269-residue protein sequence, read N- to C-terminus: Thymidylate synthase (269 aa).

R26 contributes to the dUMP binding site. H56 is a (6R)-5,10-methylene-5,6,7,8-tetrahydrofolate binding site. A dUMP-binding site is contributed by 131–132; sequence RR. The active-site Nucleophile is C151. DUMP-binding positions include 171–174, N182, and 212–214; these read RSAD and HIY. D174 provides a ligand contact to (6R)-5,10-methylene-5,6,7,8-tetrahydrofolate. Position 268 (A268) interacts with (6R)-5,10-methylene-5,6,7,8-tetrahydrofolate.

The protein belongs to the thymidylate synthase family. Bacterial-type ThyA subfamily. As to quaternary structure, homodimer.

The protein resides in the cytoplasm. It carries out the reaction dUMP + (6R)-5,10-methylene-5,6,7,8-tetrahydrofolate = 7,8-dihydrofolate + dTMP. It functions in the pathway pyrimidine metabolism; dTTP biosynthesis. In terms of biological role, catalyzes the reductive methylation of 2'-deoxyuridine-5'-monophosphate (dUMP) to 2'-deoxythymidine-5'-monophosphate (dTMP) while utilizing 5,10-methylenetetrahydrofolate (mTHF) as the methyl donor and reductant in the reaction, yielding dihydrofolate (DHF) as a by-product. This enzymatic reaction provides an intracellular de novo source of dTMP, an essential precursor for DNA biosynthesis. This Leifsonia xyli subsp. xyli (strain CTCB07) protein is Thymidylate synthase.